We begin with the raw amino-acid sequence, 1482 residues long: Chromosome partition protein MukB (1482 aa).

34–41 (GGNGAGKS) lines the ATP pocket. Coiled coils occupy residues 326 to 472 (LEAD…QTAH), 507 to 602 (NQRH…RRAP), 780 to 805 (RAAR…ATLS), 832 to 1110 (DDPE…REQV), and 1209 to 1265 (VEAI…LQSV). Residues 666 to 783 (PGGSEDPRLN…SLPLFGRAAR (118 aa)) are flexible hinge.

Belongs to the SMC family. MukB subfamily. As to quaternary structure, homodimerization via its hinge domain. Binds to DNA via its C-terminal region. Interacts, and probably forms a ternary complex, with MukE and MukF via its C-terminal region. The complex formation is stimulated by calcium or magnesium. Interacts with tubulin-related protein FtsZ.

It is found in the cytoplasm. The protein localises to the nucleoid. Plays a central role in chromosome condensation, segregation and cell cycle progression. Functions as a homodimer, which is essential for chromosome partition. Involved in negative DNA supercoiling in vivo, and by this means organize and compact chromosomes. May achieve or facilitate chromosome segregation by condensation DNA from both sides of a centrally located replisome during cell division. This chain is Chromosome partition protein MukB, found in Klebsiella pneumoniae subsp. pneumoniae (strain ATCC 700721 / MGH 78578).